The sequence spans 259 residues: Type III pantothenate kinase (259 aa).

Residue 6 to 13 participates in ATP binding; sequence DVGNTNCT. 107-110 is a substrate binding site; the sequence is GSDR. D109 acts as the Proton acceptor in catalysis. Position 129 (D129) interacts with K(+). T132 contributes to the ATP binding site. Substrate is bound at residue T184.

It belongs to the type III pantothenate kinase family. Homodimer. The cofactor is NH4(+). K(+) serves as cofactor.

The protein localises to the cytoplasm. The catalysed reaction is (R)-pantothenate + ATP = (R)-4'-phosphopantothenate + ADP + H(+). The protein operates within cofactor biosynthesis; coenzyme A biosynthesis; CoA from (R)-pantothenate: step 1/5. Its function is as follows. Catalyzes the phosphorylation of pantothenate (Pan), the first step in CoA biosynthesis. The polypeptide is Type III pantothenate kinase (Listeria monocytogenes serotype 4b (strain CLIP80459)).